Consider the following 195-residue polypeptide: MPIGVPRVPFRTPGDRDASWVDILINRLYRERLLFLGQDVDSEISNQLISLMIYLSIEKENKDLYLFINSPGGWVIPGIALYDTMQFVQPDVQTVCLGLAASMGSFLLAGGTITKRLAFPHAMIHQPASSFYEAQAGEFILEAEELLKMRETITRVYVQRTGKSLWVISEDMERDVFMSAAEAQAHGIVDLVAVE.

The Nucleophile role is filled by serine 102. The active site involves histidine 125.

The protein belongs to the peptidase S14 family. As to quaternary structure, component of the chloroplastic Clp protease core complex.

The protein resides in the plastid. Its subcellular location is the chloroplast stroma. It catalyses the reaction Hydrolysis of proteins to small peptides in the presence of ATP and magnesium. alpha-casein is the usual test substrate. In the absence of ATP, only oligopeptides shorter than five residues are hydrolyzed (such as succinyl-Leu-Tyr-|-NHMec, and Leu-Tyr-Leu-|-Tyr-Trp, in which cleavage of the -Tyr-|-Leu- and -Tyr-|-Trp bonds also occurs).. Cleaves peptides in various proteins in a process that requires ATP hydrolysis. Has a chymotrypsin-like activity. Plays a major role in the degradation of misfolded proteins. This is ATP-dependent Clp protease proteolytic subunit from Phaseolus vulgaris (Kidney bean).